The following is a 151-amino-acid chain: Peptide methionine sulfoxide reductase MsrB (151 aa).

The MsrB domain occupies 5 to 127 (KEERLKQLTR…NSAALRFVPK (123 aa)). Catalysis depends on Cys116, which acts as the Nucleophile.

The protein belongs to the MsrB Met sulfoxide reductase family.

It carries out the reaction L-methionyl-[protein] + [thioredoxin]-disulfide + H2O = L-methionyl-(R)-S-oxide-[protein] + [thioredoxin]-dithiol. In Bacillus licheniformis (strain ATCC 14580 / DSM 13 / JCM 2505 / CCUG 7422 / NBRC 12200 / NCIMB 9375 / NCTC 10341 / NRRL NRS-1264 / Gibson 46), this protein is Peptide methionine sulfoxide reductase MsrB.